Consider the following 211-residue polypeptide: Ribosomal RNA small subunit methyltransferase G (211 aa).

S-adenosyl-L-methionine contacts are provided by residues G73, 126-127, and R142; that span reads IE.

It belongs to the methyltransferase superfamily. RNA methyltransferase RsmG family.

The protein resides in the cytoplasm. It catalyses the reaction guanosine(527) in 16S rRNA + S-adenosyl-L-methionine = N(7)-methylguanosine(527) in 16S rRNA + S-adenosyl-L-homocysteine. In terms of biological role, specifically methylates the N7 position of guanine in position 527 of 16S rRNA. The protein is Ribosomal RNA small subunit methyltransferase G of Methylorubrum populi (strain ATCC BAA-705 / NCIMB 13946 / BJ001) (Methylobacterium populi).